The sequence spans 871 residues: Valine--tRNA ligase (871 aa).

The 'HIGH' region signature appears at 47–57 (PNVTGRLHIGH). Residues 534 to 538 (KMSKS) carry the 'KMSKS' region motif. K537 contributes to the ATP binding site. Positions 805 to 871 (DLTPILNRLN…IEEELARLTR (67 aa)) form a coiled coil.

Belongs to the class-I aminoacyl-tRNA synthetase family. ValS type 1 subfamily. As to quaternary structure, monomer.

It is found in the cytoplasm. It carries out the reaction tRNA(Val) + L-valine + ATP = L-valyl-tRNA(Val) + AMP + diphosphate. Its function is as follows. Catalyzes the attachment of valine to tRNA(Val). As ValRS can inadvertently accommodate and process structurally similar amino acids such as threonine, to avoid such errors, it has a 'posttransfer' editing activity that hydrolyzes mischarged Thr-tRNA(Val) in a tRNA-dependent manner. This Nitratiruptor sp. (strain SB155-2) protein is Valine--tRNA ligase.